The following is a 232-amino-acid chain: Lipoprotein-releasing system ATP-binding protein LolD (232 aa).

An ABC transporter domain is found at Ile-11 to Tyr-232. Position 47–54 (Gly-47–Ser-54) interacts with ATP.

Belongs to the ABC transporter superfamily. Lipoprotein translocase (TC 3.A.1.125) family. In terms of assembly, the complex is composed of two ATP-binding proteins (LolD) and two transmembrane proteins (LolC and LolE).

It is found in the cell inner membrane. Part of the ABC transporter complex LolCDE involved in the translocation of mature outer membrane-directed lipoproteins, from the inner membrane to the periplasmic chaperone, LolA. Responsible for the formation of the LolA-lipoprotein complex in an ATP-dependent manner. This chain is Lipoprotein-releasing system ATP-binding protein LolD, found in Zymomonas mobilis subsp. mobilis (strain ATCC 31821 / ZM4 / CP4).